Consider the following 428-residue polypeptide: Bifunctional protein GlmU (428 aa).

The tract at residues 1–221 is pyrophosphorylase; it reads MDIVILAAGC…ERKAMGINTR (221 aa). Residues 6 to 9, lysine 20, glutamine 74, 79 to 80, 103 to 105, glycine 140, and asparagine 219 each bind UDP-N-acetyl-alpha-D-glucosamine; these read LAAG, GT, and YGD. Position 105 (aspartate 105) interacts with Mg(2+). Asparagine 219 contributes to the Mg(2+) binding site. The segment at 222 to 242 is linker; sequence ADLAIAESYFQCMKRASFLQS. Residues 243-428 are N-acetyltransferase; it reads GVTLTSPDQV…TTKPEYKTRR (186 aa). 2 residues coordinate UDP-N-acetyl-alpha-D-glucosamine: arginine 308 and lysine 326. The Proton acceptor role is filled by histidine 338. Residues tyrosine 341 and asparagine 352 each contribute to the UDP-N-acetyl-alpha-D-glucosamine site. Residues alanine 355, 361-362, alanine 398, and arginine 415 contribute to the acetyl-CoA site; that span reads NY.

This sequence in the N-terminal section; belongs to the N-acetylglucosamine-1-phosphate uridyltransferase family. The protein in the C-terminal section; belongs to the transferase hexapeptide repeat family. Homotrimer. Mg(2+) serves as cofactor.

Its subcellular location is the cytoplasm. The catalysed reaction is alpha-D-glucosamine 1-phosphate + acetyl-CoA = N-acetyl-alpha-D-glucosamine 1-phosphate + CoA + H(+). It catalyses the reaction N-acetyl-alpha-D-glucosamine 1-phosphate + UTP + H(+) = UDP-N-acetyl-alpha-D-glucosamine + diphosphate. It participates in nucleotide-sugar biosynthesis; UDP-N-acetyl-alpha-D-glucosamine biosynthesis; N-acetyl-alpha-D-glucosamine 1-phosphate from alpha-D-glucosamine 6-phosphate (route II): step 2/2. Its pathway is nucleotide-sugar biosynthesis; UDP-N-acetyl-alpha-D-glucosamine biosynthesis; UDP-N-acetyl-alpha-D-glucosamine from N-acetyl-alpha-D-glucosamine 1-phosphate: step 1/1. It functions in the pathway bacterial outer membrane biogenesis; LPS lipid A biosynthesis. Catalyzes the last two sequential reactions in the de novo biosynthetic pathway for UDP-N-acetylglucosamine (UDP-GlcNAc). The C-terminal domain catalyzes the transfer of acetyl group from acetyl coenzyme A to glucosamine-1-phosphate (GlcN-1-P) to produce N-acetylglucosamine-1-phosphate (GlcNAc-1-P), which is converted into UDP-GlcNAc by the transfer of uridine 5-monophosphate (from uridine 5-triphosphate), a reaction catalyzed by the N-terminal domain. In Anaplasma marginale (strain Florida), this protein is Bifunctional protein GlmU.